We begin with the raw amino-acid sequence, 447 residues long: uncharacterized protein (447 aa).

The next 3 helical transmembrane spans lie at 28–48, 241–261, and 397–417; these read IVIV…YPAV, IDAS…YYAI, and PFVL…LSIF.

The protein resides in the membrane. This is an uncharacterized protein from Schizosaccharomyces pombe (strain 972 / ATCC 24843) (Fission yeast).